Here is an 80-residue protein sequence, read N- to C-terminus: N-V protease (80 aa).

This sequence belongs to the peptidase S8 family. In terms of assembly, monomer. In terms of tissue distribution, body cavity.

It is found in the secreted. With respect to regulation, inhibited by the serine protease inhibitors DFP, PMSF and TLCK. Not inhibited by the serine protease inhibitors aprotinin, elastinal, SBTI and benzamidine, the cysteine protease inhibitors iodoacetate and E64, or the metalloprotease inhibitors EDTA and EGTA. In terms of biological role, serine protease. Hydrolyzes the alpha chains of fibrin and fibrinogen completely, has lower activity on the beta and gamma chains of fibrin and fibrinogen. This Alitta virens (Sandworm) protein is N-V protease.